A 147-amino-acid chain; its full sequence is Endothelial differentiation-related factor 1 homolog (147 aa).

Residues 1–69 (MAESDWDTVT…KLDRETEELH (69 aa)) are disordered. Residues 33 to 42 (RRGEEVETSK) show a composition bias toward basic and acidic residues. Positions 46–58 (AGQNKQHTITRNT) are enriched in polar residues. Residues 59-69 (AKLDRETEELH) show a composition bias toward basic and acidic residues. The region spanning 81–135 (IQQGRQGKGMTQKDLATKINEKPQVIADYECGKAIPNNQVMGKIERVIGLKLRGK) is the HTH cro/C1-type domain. A DNA-binding region (H-T-H motif) is located at residues 92-111 (QKDLATKINEKPQVIADYEC).

It localises to the nucleus. In terms of biological role, probable transcriptional coactivator. This is Endothelial differentiation-related factor 1 homolog (edf1) from Xenopus laevis (African clawed frog).